The chain runs to 99 residues: Small ribosomal subunit protein uS14m (99 aa).

Belongs to the universal ribosomal protein uS14 family.

The protein localises to the mitochondrion. The chain is Small ribosomal subunit protein uS14m (RPS14) from Oenothera berteroana (Bertero's evening primrose).